We begin with the raw amino-acid sequence, 460 residues long: A-type ATP synthase subunit B (460 aa).

The protein belongs to the ATPase alpha/beta chains family. In terms of assembly, has multiple subunits with at least A(3), B(3), C, D, E, F, H, I and proteolipid K(x).

It is found in the cell membrane. Its function is as follows. Component of the A-type ATP synthase that produces ATP from ADP in the presence of a proton gradient across the membrane. The B chain is a regulatory subunit. The polypeptide is A-type ATP synthase subunit B (Thermoplasma acidophilum (strain ATCC 25905 / DSM 1728 / JCM 9062 / NBRC 15155 / AMRC-C165)).